The chain runs to 290 residues: Putative OX-2 membrane glycoprotein homolog (290 aa).

The N-terminal stretch at 1 to 17 (MSSLMLRLLPLLYIISA) is a signal peptide. At 18–267 (HFVLHPETSP…SDETVFTWTV (250 aa)) the chain is on the extracellular side. The Ig-like V-type domain occupies 23–135 (PETSPSLIYE…TFTVDNEKTS (113 aa)). C41 and C125 are oxidised to a cystine. N71, N104, N194, and N202 each carry an N-linked (GlcNAc...) asparagine; by host glycan. The Ig-like C2-type domain occupies 146-236 (PIVVLYFRYL…TNQKASALVT (91 aa)). Residues 268 to 288 (PLILILISVIVLLISVCIVAF) form a helical membrane-spanning segment. Residues 289–290 (KS) lie on the Cytoplasmic side of the membrane.

The protein localises to the membrane. The polypeptide is Putative OX-2 membrane glycoprotein homolog (U85) (Homo sapiens (Human)).